Consider the following 289-residue polypeptide: ATP synthase subunit a (289 aa).

Helical transmembrane passes span 43 to 63 (AFHV…LFIF), 104 to 124 (IAPL…IDLV), 160 to 180 (ISVF…GGFL), 193 to 213 (IVVQ…TLIA), 232 to 252 (IFIL…ALGV), and 259 to 279 (AVFH…LTIV).

It belongs to the ATPase A chain family. F-type ATPases have 2 components, CF(1) - the catalytic core - and CF(0) - the membrane proton channel. CF(1) has five subunits: alpha(3), beta(3), gamma(1), delta(1), epsilon(1). CF(0) has three main subunits: a(1), b(2) and c(9-12). The alpha and beta chains form an alternating ring which encloses part of the gamma chain. CF(1) is attached to CF(0) by a central stalk formed by the gamma and epsilon chains, while a peripheral stalk is formed by the delta and b chains.

The protein localises to the cell inner membrane. Functionally, key component of the proton channel; it plays a direct role in the translocation of protons across the membrane. The sequence is that of ATP synthase subunit a from Pseudomonas paraeruginosa (strain DSM 24068 / PA7) (Pseudomonas aeruginosa (strain PA7)).